A 397-amino-acid chain; its full sequence is Argininosuccinate synthase (397 aa).

Ala-8 to Ser-16 contributes to the ATP binding site. L-citrulline is bound by residues Tyr-86 and Ser-91. An ATP-binding site is contributed by Gly-116. L-aspartate contacts are provided by Thr-118, Asn-122, and Asp-123. Asn-122 contacts L-citrulline. Residues Arg-126, Ser-175, Ser-184, Glu-260, and Tyr-272 each coordinate L-citrulline.

Belongs to the argininosuccinate synthase family. Type 1 subfamily. In terms of assembly, homotetramer.

The protein localises to the cytoplasm. It carries out the reaction L-citrulline + L-aspartate + ATP = 2-(N(omega)-L-arginino)succinate + AMP + diphosphate + H(+). The protein operates within amino-acid biosynthesis; L-arginine biosynthesis; L-arginine from L-ornithine and carbamoyl phosphate: step 2/3. In Clostridium botulinum (strain ATCC 19397 / Type A), this protein is Argininosuccinate synthase.